Here is a 351-residue protein sequence, read N- to C-terminus: UDP-3-O-acylglucosamine N-acyltransferase (351 aa).

The Proton acceptor role is filled by histidine 240.

It belongs to the transferase hexapeptide repeat family. LpxD subfamily. Homotrimer.

It catalyses the reaction a UDP-3-O-[(3R)-3-hydroxyacyl]-alpha-D-glucosamine + a (3R)-hydroxyacyl-[ACP] = a UDP-2-N,3-O-bis[(3R)-3-hydroxyacyl]-alpha-D-glucosamine + holo-[ACP] + H(+). It participates in bacterial outer membrane biogenesis; LPS lipid A biosynthesis. In terms of biological role, catalyzes the N-acylation of UDP-3-O-acylglucosamine using 3-hydroxyacyl-ACP as the acyl donor. Is involved in the biosynthesis of lipid A, a phosphorylated glycolipid that anchors the lipopolysaccharide to the outer membrane of the cell. The protein is UDP-3-O-acylglucosamine N-acyltransferase of Pseudomonas fluorescens (strain SBW25).